A 1894-amino-acid polypeptide reads, in one-letter code: Fibronectin type III domain-containing protein 1 (1894 aa).

The N-terminal stretch at 1–32 (MAPEAGATLRAPRRLSWAALLLLAALLPVASS) is a signal peptide. The Fibronectin type-III 1 domain occupies 39–131 (HPLKPRHVKL…PVYRAESPPG (93 aa)). An N-linked (GlcNAc...) asparagine glycan is attached at Asn-149. 3 consecutive Fibronectin type-III domains span residues 158 to 258 (PNKP…SEED), 262 to 357 (VPDD…TPES), and 362 to 457 (APEN…MPTT). Disordered stretches follow at residues 455-500 (PTTS…PQGR), 515-1271 (ANGG…TVSP), 1311-1350 (LSRQ…IING), and 1444-1515 (THPP…CPPG). Residues 565-574 (TLRPPSRHGH) are compositionally biased toward basic residues. Low complexity predominate over residues 614 to 625 (PSASASPAHHAS). Residues 626–641 (TQGTSHRPSLPASLND) show a composition bias toward polar residues. Composition is skewed to low complexity over residues 711–722 (SASAPPSRLSPP) and 759–778 (SRST…TQVS). At Ser-717 the chain carries Phosphoserine. Residues 786–799 (GESHGDGDREDGGR) are compositionally biased toward basic and acidic residues. Composition is skewed to polar residues over residues 941 to 957 (KYSS…QSTD) and 1027 to 1060 (SPSQ…TASS). Over residues 1071 to 1088 (QDEDAQGSYDDDSTEVEA) the composition is skewed to acidic residues. Residues 1166–1176 (PLSSKSQQSVS) are compositionally biased toward polar residues. Residues 1197-1209 (SSSVPKWPSSSTP) show a composition bias toward low complexity. Residues 1211 to 1226 (GGKDADGSLAKEEREP) are compositionally biased toward basic and acidic residues. Residues 1445-1504 (HPPTTTMQPTTTTTPLPTTTTPRPTTATTRRTTTTRRTTTRRPTTTVRTTTRTTTTTTPT) show a composition bias toward low complexity. The Fibronectin type-III 5 domain occupies 1658–1752 (APRNITVVAV…PSVSFVTESD (95 aa)). Asn-1661 carries an N-linked (GlcNAc...) asparagine glycan.

Almost absent from healthy skin; especially in epidermal keratinocytes, skin fibroblasts or endothelial cells and is barely detectable in benign melanocytic naevi. Expressed in the stroma close to skin tumors, in the tumor cells themselves and in the epidermis of psoriasis.

The protein resides in the secreted. In terms of biological role, may be an activator of G protein signaling. In Homo sapiens (Human), this protein is Fibronectin type III domain-containing protein 1 (FNDC1).